The following is a 436-amino-acid chain: Nicotinate phosphoribosyltransferase (436 aa).

His-231 carries the post-translational modification Phosphohistidine; by autocatalysis.

It belongs to the NAPRTase family. Transiently phosphorylated on a His residue during the reaction cycle. Phosphorylation strongly increases the affinity for substrates and increases the rate of nicotinate D-ribonucleotide production. Dephosphorylation regenerates the low-affinity form of the enzyme, leading to product release.

The catalysed reaction is nicotinate + 5-phospho-alpha-D-ribose 1-diphosphate + ATP + H2O = nicotinate beta-D-ribonucleotide + ADP + phosphate + diphosphate. It functions in the pathway cofactor biosynthesis; NAD(+) biosynthesis; nicotinate D-ribonucleotide from nicotinate: step 1/1. Functionally, catalyzes the synthesis of beta-nicotinate D-ribonucleotide from nicotinate and 5-phospho-D-ribose 1-phosphate at the expense of ATP. This is Nicotinate phosphoribosyltransferase from Vibrio parahaemolyticus serotype O3:K6 (strain RIMD 2210633).